The following is a 598-amino-acid chain: Insulin-like growth factor 2 mRNA-binding protein 1 (598 aa).

2 RRM domains span residues 2 to 75 (NKLY…HSVP) and 81 to 156 (RKLQ…YIPD). The segment at 155-195 (PDENSEVDSQRGPDNGRRPGYGPRGTSRQMSPGSGIPSKHQ) is disordered. Residues 162–171 (DSQRGPDNGR) show a composition bias toward basic and acidic residues. S185 carries the post-translational modification Phosphoserine. KH domains are found at residues 198 to 263 (DIPL…CRMI) and 279 to 346 (EVPL…EQEI). The residue at position 399 (Y399) is a Phosphotyrosine. 2 KH domains span residues 407 to 472 (QETV…QGRI) and 489 to 555 (KLET…QRKI). Residues 561–598 (QVKQQQKGGGMGTPQGPHPQGMTELGSPQGLAQEPRRK) form a disordered region. A phosphothreonine mark is found at T573 and T583. Positions 574-583 (PQGPHPQGMT) are enriched in low complexity. The residue at position 587 (S587) is a Phosphoserine.

The protein belongs to the RRM IMP/VICKZ family. Component of the CRD-mediated complex.

The protein resides in the nucleus. Its subcellular location is the cytoplasm. It is found in the perinuclear region. It localises to the P-body. The protein localises to the stress granule. The protein resides in the cell projection. Its subcellular location is the growth cone. It is found in the filopodium. It localises to the lamellipodium. Functionally, RNA-binding factor that recruits target transcripts to cytoplasmic protein-RNA complexes (mRNPs). This transcript 'caging' into mRNPs allows mRNA transport and transient storage. It also modulates the rate and location at which target transcripts encounter the translational apparatus and shields them from endonuclease attacks or microRNA-mediated degradation. Preferentially binds to N6-methyladenosine (m6A)-containing mRNAs and increases their stability. Plays a direct role in the transport and translation of transcripts required for axonal regeneration in adult sensory neurons. Regulates localized beta-actin/ACTB mRNA translation in polarized cells, a crucial process for cell migration and neurite outgrowth. Promotes the directed movement of cells by fine-tuning intracellular signaling networks and enhances the velocity of cell migration. The polypeptide is Insulin-like growth factor 2 mRNA-binding protein 1 (igf2bp1) (Danio rerio (Zebrafish)).